Reading from the N-terminus, the 767-residue chain is MTPPPPSPLLGTQVKEDRADYKEFQDFSSLPDTHNIAWDHSFYPFQEEEEHGVKGVESVLEKGVLDEGVLEAWGCCRRCRHAGWNRSQPSPELAGAVIHARAPAVGCRQRSGHLHVRLKQRLLERPCQEPLGKKYQLELPPLYERARKPEGSKNLPADGQGLRAVRADAALPVWPGGPGRPGPHAPEAGAEGQHQGQWPPADTRHLRTPKWPYKVATEEKPEAEEAEKKRQAKVQEKRLPPWKKRTLNQVHRVPWGQHRACQVMLLVSTKQLQRYLHFEKPAKPANMGQDPDCFGKSEGELATCLCGGESVVGETEAPGVRPDPRPEKDAKPAVSGCQEESWLQSEYDEMHPREEMNVPSLRSGSGCQVSGSPLAKGLHPLQPCHPHYMMWECCLFTLTLGTQACFEVCARRLKLAHFCPDTSLWSCGGQSPPVLCQLLDIISVSRDKVIGSHEKKPSSNPNQDDFHSSEYAYRCGIAEAVGLPSIPVHPIGYYDAEKLLEYESLLLQVSEPVNPELSAGPITGLLDRLSGFRDHGPPGSSCRSQRKGNGVETKDQAHRNRDPRGFQGGVLTARLFKMQVSLELFCGHQEHYLTRPVLAPGYPVHLGKAGTHWEQGPNMPTPEQHGTWGNRHLFAVLPLLFYTSLEIMSIGYSVVMAGRNVWQPTKGQMPHQPEQSCQTLALPMTIRHSWEGGAIRESSGWVSWKCHLKATEASQNPCVRATALRVGCSAVTYGVLGQAQGSAPWTSAFKTFSAGIAGLERHAWETM.

Disordered regions lie at residues 171 to 209, 314 to 340, and 533 to 566; these read LPVW…LRTP, ETEA…CQEE, and RDHG…PRGF. Basic and acidic residues-rich tracts occupy residues 322 to 331 and 552 to 564; these read PDPRPEKDAK and ETKD…RDPR.

This is an uncharacterized protein from Homo sapiens (Human).